Here is a 360-residue protein sequence, read N- to C-terminus: DNA replication and repair protein RecF (360 aa).

33–40 contacts ATP; it reads GENGSGKT.

It belongs to the RecF family.

The protein resides in the cytoplasm. Its function is as follows. The RecF protein is involved in DNA metabolism; it is required for DNA replication and normal SOS inducibility. RecF binds preferentially to single-stranded, linear DNA. It also seems to bind ATP. This Rickettsia typhi (strain ATCC VR-144 / Wilmington) protein is DNA replication and repair protein RecF.